Consider the following 304-residue polypeptide: Dihydroorotate dehydrogenase B (NAD(+)), catalytic subunit (304 aa).

FMN is bound by residues S21 and 45–46 (KA). Substrate contacts are provided by residues K45 and 69 to 73 (NAIGL). Residues N99 and N127 each contribute to the FMN site. N127 contacts substrate. Residue C130 is the Nucleophile of the active site. Positions 165 and 191 each coordinate FMN. Residue 192-193 (NT) participates in substrate binding. Residues G217, 243–244 (GG), and 265–266 (GT) contribute to the FMN site.

It belongs to the dihydroorotate dehydrogenase family. Type 1 subfamily. In terms of assembly, heterotetramer of 2 PyrK and 2 PyrD type B subunits. The cofactor is FMN.

Its subcellular location is the cytoplasm. The enzyme catalyses (S)-dihydroorotate + NAD(+) = orotate + NADH + H(+). The protein operates within pyrimidine metabolism; UMP biosynthesis via de novo pathway; orotate from (S)-dihydroorotate (NAD(+) route): step 1/1. Its function is as follows. Catalyzes the conversion of dihydroorotate to orotate with NAD(+) as electron acceptor. The sequence is that of Dihydroorotate dehydrogenase B (NAD(+)), catalytic subunit (pyrD) from Listeria monocytogenes serovar 1/2a (strain ATCC BAA-679 / EGD-e).